Here is a 356-residue protein sequence, read N- to C-terminus: DNA polymerase IV (356 aa).

Residues 7 to 188 (IIHIDMDCFY…LPLKKIPGVG (182 aa)) enclose the UmuC domain. Positions 11 and 106 each coordinate Mg(2+). Glu107 is an active-site residue.

The protein belongs to the DNA polymerase type-Y family. As to quaternary structure, monomer. Mg(2+) serves as cofactor.

The protein localises to the cytoplasm. The enzyme catalyses DNA(n) + a 2'-deoxyribonucleoside 5'-triphosphate = DNA(n+1) + diphosphate. In terms of biological role, poorly processive, error-prone DNA polymerase involved in untargeted mutagenesis. Copies undamaged DNA at stalled replication forks, which arise in vivo from mismatched or misaligned primer ends. These misaligned primers can be extended by PolIV. Exhibits no 3'-5' exonuclease (proofreading) activity. May be involved in translesional synthesis, in conjunction with the beta clamp from PolIII. This Actinobacillus pleuropneumoniae serotype 3 (strain JL03) protein is DNA polymerase IV.